A 321-amino-acid polypeptide reads, in one-letter code: Ribosomal RNA small subunit methyltransferase H (321 aa).

S-adenosyl-L-methionine is bound by residues 40–42, aspartate 60, phenylalanine 84, aspartate 106, and glutamine 113; that span reads GGH.

The protein belongs to the methyltransferase superfamily. RsmH family.

It localises to the cytoplasm. It catalyses the reaction cytidine(1402) in 16S rRNA + S-adenosyl-L-methionine = N(4)-methylcytidine(1402) in 16S rRNA + S-adenosyl-L-homocysteine + H(+). Functionally, specifically methylates the N4 position of cytidine in position 1402 (C1402) of 16S rRNA. The polypeptide is Ribosomal RNA small subunit methyltransferase H (Haemophilus influenzae (strain ATCC 51907 / DSM 11121 / KW20 / Rd)).